We begin with the raw amino-acid sequence, 193 residues long: Potassium-transporting ATPase KdpC subunit (193 aa).

The helical transmembrane segment at 7–27 (PALVLFALLSALTGLAYPLAV) threads the bilayer.

The protein belongs to the KdpC family. As to quaternary structure, the system is composed of three essential subunits: KdpA, KdpB and KdpC.

The protein localises to the cell inner membrane. In terms of biological role, part of the high-affinity ATP-driven potassium transport (or Kdp) system, which catalyzes the hydrolysis of ATP coupled with the electrogenic transport of potassium into the cytoplasm. This subunit acts as a catalytic chaperone that increases the ATP-binding affinity of the ATP-hydrolyzing subunit KdpB by the formation of a transient KdpB/KdpC/ATP ternary complex. This is Potassium-transporting ATPase KdpC subunit from Variovorax paradoxus (strain S110).